The chain runs to 443 residues: ASTRA-associated protein 1 (443 aa).

WD repeat units follow at residues 23-67, 71-110, 258-295, and 318-359; these read YHKR…PITH, EGNS…QLSI, HYPN…QLET, and KVHL…VEQT. The tract at residues 372–391 is disordered; the sequence is SSMGDLTNGSGSNTESSSKS. The segment covering 378 to 391 has biased composition (low complexity); it reads TNGSGSNTESSSKS.

This sequence belongs to the WD repeat ASA1 family. As to quaternary structure, component of the ASTRA chromatin remodeling machinery complex composed of at least RVB1, RVB2, TRA1, TEL2, TTI1 and TTI2.

It is found in the nucleus. Component of the ASTRA complex involved in chromatin remodeling. The polypeptide is ASTRA-associated protein 1 (ASA1) (Saccharomyces cerevisiae (strain RM11-1a) (Baker's yeast)).